Reading from the N-terminus, the 216-residue chain is Adenylate kinase (216 aa).

10 to 15 provides a ligand contact to ATP; it reads GAGKGT. Residues 30-59 are NMP; that stretch reads STGDIFRANIKEKTPLGIEAKRYMDNGQLV. AMP-binding positions include Thr-31, Arg-36, 57 to 59, 85 to 88, and Gln-92; these read QLV and GFPR. The LID stretch occupies residues 126–163; the sequence is GRRVCTSCGASYHIRFNPPKIEGKCDICDNELIQRKDD. An ATP-binding site is contributed by Arg-127. Zn(2+)-binding residues include Cys-130 and Cys-133. 136-137 provides a ligand contact to ATP; that stretch reads SY. Zn(2+) is bound by residues Cys-150 and Cys-153. AMP-binding residues include Arg-160 and Arg-171. An ATP-binding site is contributed by Glu-199.

This sequence belongs to the adenylate kinase family. As to quaternary structure, monomer.

Its subcellular location is the cytoplasm. It catalyses the reaction AMP + ATP = 2 ADP. Its pathway is purine metabolism; AMP biosynthesis via salvage pathway; AMP from ADP: step 1/1. In terms of biological role, catalyzes the reversible transfer of the terminal phosphate group between ATP and AMP. Plays an important role in cellular energy homeostasis and in adenine nucleotide metabolism. In Clostridium botulinum (strain Loch Maree / Type A3), this protein is Adenylate kinase.